The sequence spans 244 residues: Large ribosomal subunit protein uL3 (244 aa).

This sequence belongs to the universal ribosomal protein uL3 family. Part of the 50S ribosomal subunit. Forms a cluster with proteins L14 and L19.

One of the primary rRNA binding proteins, it binds directly near the 3'-end of the 23S rRNA, where it nucleates assembly of the 50S subunit. In Aquifex pyrophilus, this protein is Large ribosomal subunit protein uL3.